A 127-amino-acid polypeptide reads, in one-letter code: Aspartate 1-decarboxylase (127 aa).

Catalysis depends on S25, which acts as the Schiff-base intermediate with substrate; via pyruvic acid. S25 is modified (pyruvic acid (Ser)). T57 provides a ligand contact to substrate. The Proton donor role is filled by Y58. 73–75 is a substrate binding site; that stretch reads GAA.

It belongs to the PanD family. As to quaternary structure, heterooctamer of four alpha and four beta subunits. Pyruvate is required as a cofactor. Post-translationally, is synthesized initially as an inactive proenzyme, which is activated by self-cleavage at a specific serine bond to produce a beta-subunit with a hydroxyl group at its C-terminus and an alpha-subunit with a pyruvoyl group at its N-terminus.

Its subcellular location is the cytoplasm. The enzyme catalyses L-aspartate + H(+) = beta-alanine + CO2. It participates in cofactor biosynthesis; (R)-pantothenate biosynthesis; beta-alanine from L-aspartate: step 1/1. Functionally, catalyzes the pyruvoyl-dependent decarboxylation of aspartate to produce beta-alanine. This Staphylococcus aureus (strain bovine RF122 / ET3-1) protein is Aspartate 1-decarboxylase.